The sequence spans 113 residues: UPF0251 protein TK0562 (113 aa).

It belongs to the UPF0251 family.

The polypeptide is UPF0251 protein TK0562 (Thermococcus kodakarensis (strain ATCC BAA-918 / JCM 12380 / KOD1) (Pyrococcus kodakaraensis (strain KOD1))).